A 390-amino-acid chain; its full sequence is Putative gustatory receptor 36c (390 aa).

Over 1-4 (MDLE) the chain is Cytoplasmic. Residues 5-25 (SFLLGAVYYYGLFIGLSNFEF) traverse the membrane as a helical segment. At 26–36 (DWNTGRVFTKK) the chain is on the extracellular side. A helical transmembrane segment spans residues 37–57 (WSTLYAIALDSCIFALYIYHW). At 58–75 (TGNTNIVNAIFGRANMLH) the chain is on the cytoplasmic side. The chain crosses the membrane as a helical span at residues 76-96 (EYVVAILTGLRIVTGLFTLIL). Residues 97–132 (RWYQRCKMMDLASKVVRMYVARPQVRRMSRWGILTK) are Extracellular-facing. A helical membrane pass occupies residues 133 to 153 (FIFGSITDGLQMAMVLSAMGS). The Cytoplasmic segment spans residues 154–165 (VDSQFYLGLGLQ). The chain crosses the membrane as a helical span at residues 166–186 (YWMFVILNMAMMQQHMIMLFV). Over 187–254 (RTQFQLINTE…MEEVFGIQGA (68 aa)) the chain is Extracellular. Residues 255 to 275 (MTYGGYYLSSVGTCYLAYSIL) form a helical membrane-spanning segment. At 276–288 (KHGYENLSMTLST) the chain is on the cytoplasmic side. Residues 289–309 (VILAYSWCFFYYLDGMLNLSV) traverse the membrane as a helical segment. The Extracellular portion of the chain corresponds to 310 to 390 (MLHVQDDYWE…FLIQYDIEHF (81 aa)).

It belongs to the insect chemoreceptor superfamily. Gustatory receptor (GR) family. Gr22e subfamily. Expressed in neurons of the terminal external chemosensory organ of larvae.

It localises to the cell membrane. Probable gustatory receptor which mediates acceptance or avoidance behavior, depending on its substrates. The chain is Putative gustatory receptor 36c (Gr36c) from Drosophila melanogaster (Fruit fly).